The chain runs to 348 residues: Protein RecA (348 aa).

66 to 73 (GPESSGKT) is an ATP binding site.

The protein belongs to the RecA family.

The protein resides in the cytoplasm. Can catalyze the hydrolysis of ATP in the presence of single-stranded DNA, the ATP-dependent uptake of single-stranded DNA by duplex DNA, and the ATP-dependent hybridization of homologous single-stranded DNAs. It interacts with LexA causing its activation and leading to its autocatalytic cleavage. In Neisseria meningitidis serogroup B (strain ATCC BAA-335 / MC58), this protein is Protein RecA.